The sequence spans 88 residues: Large ribosomal subunit protein bL27 (88 aa).

The interval 1-21 (MAHKKGQGSTQNNRDSAGRRL) is disordered.

This sequence belongs to the bacterial ribosomal protein bL27 family.

The polypeptide is Large ribosomal subunit protein bL27 (Helicobacter acinonychis (strain Sheeba)).